The chain runs to 550 residues: Homeobox and leucine zipper protein Homez (550 aa).

The segment covering 1–10 (MVRGWEPPPG) has biased composition (pro residues). Positions 1 to 36 (MVRGWEPPPGLDCAISEGHKSEGTMPPNKEASGLSS) are disordered. Residues 55-114 (WTQAAQTSELDSNEHLLKTFSYFPYPSLADIALLCLRYGLQMEKVKTWFMAQRLRCGISW) constitute a DNA-binding region (homeobox 1). Residues 168-199 (GPPTLSKPTQTKGLKVEPEEPSQMPPLPQSHQ) form a disordered region. Glycyl lysine isopeptide (Lys-Gly) (interchain with G-Cter in SUMO2) cross-links involve residues K182, K200, and K202. Positions 223 to 265 (LQSSGLSKEQAGRGPNQSHGIGTASWNHSTTVPQPQARDKPPP) are disordered. The span at 237–256 (PNQSHGIGTASWNHSTTVPQ) shows a compositional bias: polar residues. S351 carries the phosphoserine modification. DNA-binding regions (homeobox) lie at residues 355–415 (QRQR…KHGQ) and 451–510 (TPPL…AEVV). A Nuclear localization signal motif is present at residues 358–363 (RKTKRK). 2 disordered regions span residues 424-465 (VPGA…DIQP) and 512-550 (CLDE…IIQD). T451 carries the post-translational modification Phosphothreonine. The segment covering 452–463 (PPLPIPPPPPDI) has biased composition (pro residues). Over residues 513–550 (LDEEEEEEEEELPEDDEEEEEEEEEDDDDDDDDVIIQD) the composition is skewed to acidic residues.

As to quaternary structure, homodimer or heterodimer (Potential). Interacts with HOXC8. As to expression, ubiquitous. Strongly expressed in adult testis and kidney as well as fetal lung and kidney.

The protein resides in the nucleus. Its function is as follows. May function as a transcriptional regulator. This Homo sapiens (Human) protein is Homeobox and leucine zipper protein Homez (HOMEZ).